Here is an 84-residue protein sequence, read N- to C-terminus: ATP synthase subunit c (84 aa).

The next 2 membrane-spanning stretches (helical) occupy residues 10–30 (IAVG…FALL) and 53–73 (FIIA…ALLF).

Belongs to the ATPase C chain family. In terms of assembly, F-type ATPases have 2 components, F(1) - the catalytic core - and F(0) - the membrane proton channel. F(1) has five subunits: alpha(3), beta(3), gamma(1), delta(1), epsilon(1). F(0) has three main subunits: a(1), b(2) and c(10-14). The alpha and beta chains form an alternating ring which encloses part of the gamma chain. F(1) is attached to F(0) by a central stalk formed by the gamma and epsilon chains, while a peripheral stalk is formed by the delta and b chains.

The protein localises to the cell inner membrane. In terms of biological role, f(1)F(0) ATP synthase produces ATP from ADP in the presence of a proton or sodium gradient. F-type ATPases consist of two structural domains, F(1) containing the extramembraneous catalytic core and F(0) containing the membrane proton channel, linked together by a central stalk and a peripheral stalk. During catalysis, ATP synthesis in the catalytic domain of F(1) is coupled via a rotary mechanism of the central stalk subunits to proton translocation. Its function is as follows. Key component of the F(0) channel; it plays a direct role in translocation across the membrane. A homomeric c-ring of between 10-14 subunits forms the central stalk rotor element with the F(1) delta and epsilon subunits. The polypeptide is ATP synthase subunit c (Vibrio alginolyticus).